The chain runs to 780 residues: Heat shock protein 90-5, chloroplastic (780 aa).

The transit peptide at 1-60 directs the protein to the chloroplast; it reads MAPALSRSLYTSPLTSVPITPVSSRLSHLRSSFLPHGGALRTGVSCSWNLEKRCNRFAVK. ATP contacts are provided by residues Glu-106, Asn-110, Asp-152, Met-157, 172–173, 196–201, Thr-251, and Arg-441; these read SG and QFGVGF. The interval 742 to 780 is disordered; the sequence is GRVEEEEESSTVNEGDDKSGETEVVEPSEVRAESDPWQD. Residues 769–780 are compositionally biased toward basic and acidic residues; it reads SEVRAESDPWQD.

It belongs to the heat shock protein 90 family. Homodimer. Interacts with VIPP1. Interacts with P23-1. Expressed in roots, cotyledons, young leaves, mature leaves, stems, flowers, petals and siliques.

It is found in the plastid. The protein localises to the chloroplast stroma. Functionally, molecular chaperone required for chloroplast biogenesis. Essential for chloroplast biogenesis and maintenance, and thus for embryogenesis. May be involved in the disassembly of VIPP1 for thylakoid membrane formation and/or maintenance. Cooperates with TIC components and other molecular chaperones to drive transport of preproteins into chloroplasts and functions in the chloroplast stroma to facilitate membrane translocation during protein import into the organelle. This Arabidopsis thaliana (Mouse-ear cress) protein is Heat shock protein 90-5, chloroplastic.